A 219-amino-acid polypeptide reads, in one-letter code: PKHD-type hydroxylase SYNPCC7002_A2658 (219 aa).

The Fe2OG dioxygenase domain maps to 78–172 (TVHTLLFSRY…RLVAVGWVQS (95 aa)). His96, Asp98, and His153 together coordinate Fe cation. Arg163 contributes to the 2-oxoglutarate binding site.

Fe(2+) is required as a cofactor. Requires L-ascorbate as cofactor.

In Picosynechococcus sp. (strain ATCC 27264 / PCC 7002 / PR-6) (Agmenellum quadruplicatum), this protein is PKHD-type hydroxylase SYNPCC7002_A2658.